A 212-amino-acid polypeptide reads, in one-letter code: Methylthioribulose-1-phosphate dehydratase (212 aa).

Zn(2+) is bound by residues His97 and His99.

Belongs to the aldolase class II family. MtnB subfamily. In terms of assembly, homotetramer. It depends on Zn(2+) as a cofactor.

The catalysed reaction is 5-(methylsulfanyl)-D-ribulose 1-phosphate = 5-methylsulfanyl-2,3-dioxopentyl phosphate + H2O. It functions in the pathway amino-acid biosynthesis; L-methionine biosynthesis via salvage pathway; L-methionine from S-methyl-5-thio-alpha-D-ribose 1-phosphate: step 2/6. Catalyzes the dehydration of methylthioribulose-1-phosphate (MTRu-1-P) into 2,3-diketo-5-methylthiopentyl-1-phosphate (DK-MTP-1-P). This is Methylthioribulose-1-phosphate dehydratase from Bacillus cereus (strain G9842).